A 341-amino-acid chain; its full sequence is D-aspartate oxidase (341 aa).

Positions 36, 37, 43, 44, 50, 307, 311, and 312 each coordinate FAD. Residues 339–341 carry the Microbody targeting signal motif; it reads SKL.

This sequence belongs to the DAMOX/DASOX family. In terms of assembly, tetramer. Interacts with PEX5; the interaction is direct and required for localization of DDO to the peroxisome. The cofactor is FAD. Expressed in liver and kidney (at protein level). In the brain, expressed in the frontal, temporal, and occipital lobes of the cortex, hippocampus, striatum, diencephalon, brainstem, cerebellum, spinal cord, plexus choroiderus and ependyma (at protein level). Also expressed in the lung, muscle, heart, spleen, small intestine and testis (at protein level).

It is found in the peroxisome matrix. It localises to the cytoplasm. Its subcellular location is the cytosol. It catalyses the reaction D-aspartate + O2 + H2O = oxaloacetate + H2O2 + NH4(+). It carries out the reaction D-glutamate + O2 + H2O = H2O2 + 2-oxoglutarate + NH4(+). Its activity is regulated as follows. Inhibited by aminooxyacetic acid, malonate, meso-tartrate and potassium bromide. Selectively catalyzes the oxidative deamination of acidic amino acids. Suppresses the level of D-aspartate in the brain, an amino acid that can act as an agonist for glutamate receptors. Protects the organism from the toxicity of D-amino acids. May also function in the intestine. This Rattus norvegicus (Rat) protein is D-aspartate oxidase.